The sequence spans 533 residues: 2,3-bisphosphoglycerate-independent phosphoglycerate mutase (533 aa).

Mn(2+)-binding residues include Asp15 and Ser65. The Phosphoserine intermediate role is filled by Ser65. Residues His126, 156–157 (RD), Arg188, Arg194, 258–261 (RPDR), and Lys331 each bind substrate. Residues Asp398, His402, Asp439, His440, and His457 each coordinate Mn(2+).

This sequence belongs to the BPG-independent phosphoglycerate mutase family. Monomer. Requires Mn(2+) as cofactor.

It carries out the reaction (2R)-2-phosphoglycerate = (2R)-3-phosphoglycerate. It participates in carbohydrate degradation; glycolysis; pyruvate from D-glyceraldehyde 3-phosphate: step 3/5. In terms of biological role, catalyzes the interconversion of 2-phosphoglycerate and 3-phosphoglycerate. The polypeptide is 2,3-bisphosphoglycerate-independent phosphoglycerate mutase (Trichormus variabilis (strain ATCC 29413 / PCC 7937) (Anabaena variabilis)).